The primary structure comprises 307 residues: 4-hydroxy-3-methylbut-2-enyl diphosphate reductase (307 aa).

Residue cysteine 13 coordinates [4Fe-4S] cluster. (2E)-4-hydroxy-3-methylbut-2-enyl diphosphate is bound by residues histidine 42 and histidine 75. Dimethylallyl diphosphate contacts are provided by histidine 42 and histidine 75. 2 residues coordinate isopentenyl diphosphate: histidine 42 and histidine 75. Cysteine 97 is a [4Fe-4S] cluster binding site. Histidine 125 contacts (2E)-4-hydroxy-3-methylbut-2-enyl diphosphate. Histidine 125 contacts dimethylallyl diphosphate. Histidine 125 contacts isopentenyl diphosphate. Catalysis depends on glutamate 127, which acts as the Proton donor. (2E)-4-hydroxy-3-methylbut-2-enyl diphosphate is bound at residue threonine 165. Cysteine 195 contributes to the [4Fe-4S] cluster binding site. Serine 223, serine 224, asparagine 225, and serine 267 together coordinate (2E)-4-hydroxy-3-methylbut-2-enyl diphosphate. Dimethylallyl diphosphate-binding residues include serine 223, serine 224, asparagine 225, and serine 267. Isopentenyl diphosphate contacts are provided by serine 223, serine 224, asparagine 225, and serine 267.

This sequence belongs to the IspH family. [4Fe-4S] cluster serves as cofactor.

It carries out the reaction isopentenyl diphosphate + 2 oxidized [2Fe-2S]-[ferredoxin] + H2O = (2E)-4-hydroxy-3-methylbut-2-enyl diphosphate + 2 reduced [2Fe-2S]-[ferredoxin] + 2 H(+). The catalysed reaction is dimethylallyl diphosphate + 2 oxidized [2Fe-2S]-[ferredoxin] + H2O = (2E)-4-hydroxy-3-methylbut-2-enyl diphosphate + 2 reduced [2Fe-2S]-[ferredoxin] + 2 H(+). The protein operates within isoprenoid biosynthesis; dimethylallyl diphosphate biosynthesis; dimethylallyl diphosphate from (2E)-4-hydroxy-3-methylbutenyl diphosphate: step 1/1. Its pathway is isoprenoid biosynthesis; isopentenyl diphosphate biosynthesis via DXP pathway; isopentenyl diphosphate from 1-deoxy-D-xylulose 5-phosphate: step 6/6. In terms of biological role, catalyzes the conversion of 1-hydroxy-2-methyl-2-(E)-butenyl 4-diphosphate (HMBPP) into a mixture of isopentenyl diphosphate (IPP) and dimethylallyl diphosphate (DMAPP). Acts in the terminal step of the DOXP/MEP pathway for isoprenoid precursor biosynthesis. The protein is 4-hydroxy-3-methylbut-2-enyl diphosphate reductase of Chlamydia trachomatis serovar L2b (strain UCH-1/proctitis).